A 212-amino-acid polypeptide reads, in one-letter code: MTSQRTRERLIQRLYEEGVSNAKVLEVIRKTPRHLFVDEALAHRAYEDTALPIGHNQTISQPFMVAHMSELLLEAGPLDKVLEIGTGSGYQTAILAQLVERVFSVERIKVLQDRAKERLVELNLRNVVFRWGDGCEGWPALAPYNGIIVTAVAPEVPQALLDQLAPGGRMVIPVGPAGETQQLMLIVREEQGFSRRVLGAVRFVPLLNGPLA.

Ser60 is an active-site residue.

Belongs to the methyltransferase superfamily. L-isoaspartyl/D-aspartyl protein methyltransferase family.

It localises to the cytoplasm. It catalyses the reaction [protein]-L-isoaspartate + S-adenosyl-L-methionine = [protein]-L-isoaspartate alpha-methyl ester + S-adenosyl-L-homocysteine. In terms of biological role, catalyzes the methyl esterification of L-isoaspartyl residues in peptides and proteins that result from spontaneous decomposition of normal L-aspartyl and L-asparaginyl residues. It plays a role in the repair and/or degradation of damaged proteins. The sequence is that of Protein-L-isoaspartate O-methyltransferase from Pseudomonas entomophila (strain L48).